The chain runs to 811 residues: Myb-like DNA-binding protein BAS1 (811 aa).

One can recognise a Myb-like domain in the interval 34–110; that stretch reads HRKNGRNSWS…DVRKRWTGSL (77 aa). 2 HTH myb-type domains span residues 111–165 and 166–218; these read DPNL…GPGS and KGRL…TMVV. 2 DNA-binding regions (H-T-H motif) span residues 138-161 and 191-214; these read WLSI…IEVL and WRKI…RKII. The span at 237 to 264 shows a compositional bias: basic and acidic residues; sequence DMTDGKLRQHPIADSDIRSDSTPNKEEQ. Disordered regions lie at residues 237–320, 348–379, 535–713, and 782–811; these read DMTD…SAPP, SQMN…DEHM, ATSH…LRDE, and LHNE…LNPS. Residues 265 to 275 are compositionally biased toward low complexity; that stretch reads LQLSQQNNPSL. A compositionally biased stretch (basic and acidic residues) spans 282 to 298; it reads NVKENESSKLPRLKDND. Polar residues-rich tracts occupy residues 348 to 366, 535 to 613, and 653 to 664; these read SQMN…QTSL, ATSH…TSGS, and LNPSPNSVRSNG. Residues 782–794 are compositionally biased toward basic and acidic residues; it reads LHNEAKKTSEHDM.

Monomer.

It is found in the nucleus. Activates HIS4 transcription only in combination with PHO2/BAS2. BAS1 is also involved in the regulation of the purine biosynthesis pathway. The sequence is that of Myb-like DNA-binding protein BAS1 (BAS1) from Saccharomyces cerevisiae (strain ATCC 204508 / S288c) (Baker's yeast).